The sequence spans 572 residues: Proline--tRNA ligase (572 aa).

Belongs to the class-II aminoacyl-tRNA synthetase family. ProS type 1 subfamily. Homodimer.

It is found in the cytoplasm. It catalyses the reaction tRNA(Pro) + L-proline + ATP = L-prolyl-tRNA(Pro) + AMP + diphosphate. Catalyzes the attachment of proline to tRNA(Pro) in a two-step reaction: proline is first activated by ATP to form Pro-AMP and then transferred to the acceptor end of tRNA(Pro). As ProRS can inadvertently accommodate and process non-cognate amino acids such as alanine and cysteine, to avoid such errors it has two additional distinct editing activities against alanine. One activity is designated as 'pretransfer' editing and involves the tRNA(Pro)-independent hydrolysis of activated Ala-AMP. The other activity is designated 'posttransfer' editing and involves deacylation of mischarged Ala-tRNA(Pro). The misacylated Cys-tRNA(Pro) is not edited by ProRS. This chain is Proline--tRNA ligase, found in Klebsiella pneumoniae (strain 342).